Reading from the N-terminus, the 587-residue chain is Urease subunit alpha (587 aa).

Residues 134 to 572 (GGIDTHVHFI…LPLAQRYLYT (439 aa)) form the Urease domain. Residues H139, H141, and K222 each contribute to the Ni(2+) site. K222 carries the post-translational modification N6-carboxylysine. H224 provides a ligand contact to substrate. Residues H251 and H277 each coordinate Ni(2+). The active-site Proton donor is the H325. D365 is a Ni(2+) binding site.

Belongs to the metallo-dependent hydrolases superfamily. Urease alpha subunit family. As to quaternary structure, heterotrimer of UreA (gamma), UreB (beta) and UreC (alpha) subunits. Three heterotrimers associate to form the active enzyme. It depends on Ni cation as a cofactor. Post-translationally, carboxylation allows a single lysine to coordinate two nickel ions.

It localises to the cytoplasm. The catalysed reaction is urea + 2 H2O + H(+) = hydrogencarbonate + 2 NH4(+). It functions in the pathway nitrogen metabolism; urea degradation; CO(2) and NH(3) from urea (urease route): step 1/1. In Clostridium perfringens, this protein is Urease subunit alpha.